A 698-amino-acid chain; its full sequence is 4-hydroxybutyrate--CoA ligase [ADP-forming] (698 aa).

The ATP-grasp domain maps to 491 to 544; that stretch reads QEVLKAYGLPLPKSTLAKNEAEAVKAAKKIGYPVVMKIASPQIIHKSDAGGVKV. 517–544 contributes to the ATP binding site; the sequence is AKKIGYPVVMKIASPQIIHKSDAGGVKV.

It in the N-terminal section; belongs to the acetate CoA ligase alpha subunit family. This sequence in the C-terminal section; belongs to the acetate CoA ligase beta subunit family. Mg(2+) serves as cofactor. It depends on Mn(2+) as a cofactor.

It catalyses the reaction 4-hydroxybutanoate + ATP + CoA = 4-hydroxybutanoyl-CoA + ADP + phosphate. Functionally, involved in thaumarchaeal hydroxypropionate/hydroxybutyrate (HP/HB) cycle, a modified version of the autotrophic HP/HB cycle of Crenarchaeota. Catalyzes the formation of 4-hydroxybutyryl-CoA, ADP and phosphate from 4-hydroxybutyrate, coenzyme A (CoA) and ATP. Can also use acetate, propionate and butyrate, with poor catalytic efficiency. This chain is 4-hydroxybutyrate--CoA ligase [ADP-forming], found in Nitrosopumilus maritimus (strain SCM1).